Here is a 490-residue protein sequence, read N- to C-terminus: Nuclear transcription factor Y subunit beta (490 aa).

The interval 1–48 (MSGNEDFIYDDNSSSSISNQTDGGGGGGSSNNNSGGNANNNNNEGDRE) is disordered. A compositionally biased stretch (low complexity) spans 30 to 43 (SNNNSGGNANNNNN). The DNA-binding element occupies 53–59 (LPIANII). The segment at 80–91 (VQDCVSEFISFI) is subunit association domain (SAD). Disordered stretches follow at residues 139 to 195 (EKNS…QQQQ) and 221 to 264 (QQQQ…NQQY). Residues 181–195 (QQQQQPPQVQQQQQQ) are compositionally biased toward low complexity. Residues 188-219 (QVQQQQQQQQQQQQQQLQQQQQLQQHQQQQLQ) are a coiled coil. Residues 269–307 (QQQQQQQQQQQQQQQQQQQQQQQQQQQQQQQQQQQQQVQ) adopt a coiled-coil conformation. Disordered regions lie at residues 325–370 (NQQA…QHLQ) and 399–490 (QFSN…PSTS). The span at 399–468 (QFSNNNNNNN…GNSLHNSGNS (70 aa)) shows a compositional bias: low complexity. The segment covering 478–490 (PYISTNPEYPSTS) has biased composition (polar residues).

The protein belongs to the NFYB/HAP3 subunit family. As to quaternary structure, heterotrimeric transcription factor composed of three components, nfyA, nfyB and nfyC. nfyB and nfyC must interact and dimerize for nfyA association and DNA binding.

Its subcellular location is the nucleus. In terms of biological role, component of the NF-Y/HAP transcription factor complex. The NF-Y complex stimulates the transcription of various genes by recognizing and binding to a CCAAT motif in promoters. The chain is Nuclear transcription factor Y subunit beta (nfyB) from Dictyostelium discoideum (Social amoeba).